A 571-amino-acid polypeptide reads, in one-letter code: Proline--tRNA ligase (571 aa).

Belongs to the class-II aminoacyl-tRNA synthetase family. ProS type 1 subfamily. As to quaternary structure, homodimer.

Its subcellular location is the cytoplasm. The enzyme catalyses tRNA(Pro) + L-proline + ATP = L-prolyl-tRNA(Pro) + AMP + diphosphate. Catalyzes the attachment of proline to tRNA(Pro) in a two-step reaction: proline is first activated by ATP to form Pro-AMP and then transferred to the acceptor end of tRNA(Pro). As ProRS can inadvertently accommodate and process non-cognate amino acids such as alanine and cysteine, to avoid such errors it has two additional distinct editing activities against alanine. One activity is designated as 'pretransfer' editing and involves the tRNA(Pro)-independent hydrolysis of activated Ala-AMP. The other activity is designated 'posttransfer' editing and involves deacylation of mischarged Ala-tRNA(Pro). The misacylated Cys-tRNA(Pro) is not edited by ProRS. In Acinetobacter baumannii (strain AB307-0294), this protein is Proline--tRNA ligase.